Reading from the N-terminus, the 222-residue chain is LHFPL tetraspan subfamily member 3 protein (222 aa).

The next 4 helical transmembrane spans lie at 22–42, 96–116, 126–146, and 177–197; these read IGVLWAIFTICFAIINVVCFI, FFIGLSMMLIIACIVCFTLFF, ICAWMQLTFAACLVLGCMIFP, and ILAIIGILDALILSFLAVVLG.

Belongs to the LHFP family. As to expression, brain-specific.

Its subcellular location is the membrane. The sequence is that of LHFPL tetraspan subfamily member 3 protein from Mus musculus (Mouse).